The following is a 546-amino-acid chain: Chaperonin GroEL (546 aa).

ATP-binding positions include 29-32 (TLGP), Lys50, 86-90 (DGTTT), Gly414, 477-479 (NAL), and Asp493.

This sequence belongs to the chaperonin (HSP60) family. In terms of assembly, forms a cylinder of 14 subunits composed of two heptameric rings stacked back-to-back. Interacts with the co-chaperonin GroES.

Its subcellular location is the cytoplasm. It catalyses the reaction ATP + H2O + a folded polypeptide = ADP + phosphate + an unfolded polypeptide.. Its function is as follows. Together with its co-chaperonin GroES, plays an essential role in assisting protein folding. The GroEL-GroES system forms a nano-cage that allows encapsulation of the non-native substrate proteins and provides a physical environment optimized to promote and accelerate protein folding. This chain is Chaperonin GroEL, found in Leptospira interrogans serogroup Icterohaemorrhagiae serovar copenhageni (strain Fiocruz L1-130).